We begin with the raw amino-acid sequence, 54 residues long: ATP synthase protein 8 (54 aa).

A helical membrane pass occupies residues Trp-8 to Leu-28.

The protein belongs to the ATPase protein 8 family. F-type ATPases have 2 components, CF(1) - the catalytic core - and CF(0) - the membrane proton channel.

The protein resides in the mitochondrion membrane. Mitochondrial membrane ATP synthase (F(1)F(0) ATP synthase or Complex V) produces ATP from ADP in the presence of a proton gradient across the membrane which is generated by electron transport complexes of the respiratory chain. F-type ATPases consist of two structural domains, F(1) - containing the extramembraneous catalytic core and F(0) - containing the membrane proton channel, linked together by a central stalk and a peripheral stalk. During catalysis, ATP synthesis in the catalytic domain of F(1) is coupled via a rotary mechanism of the central stalk subunits to proton translocation. Part of the complex F(0) domain. Minor subunit located with subunit a in the membrane. The sequence is that of ATP synthase protein 8 (MT-ATP8) from Patiria pectinifera (Starfish).